A 1198-amino-acid chain; its full sequence is Tetratricopeptide repeat protein 17 (1198 aa).

One copy of the TPR 1 repeat lies at 295 to 328 (FTSYYTLGNIYAMLGEYNHSVLCYDHALQAKPGF). Residues 340–382 (CQQKLEQKLEAQHRSLQRTLNELKEYQKQHDHYLRQQEILEKH) adopt a coiled-coil conformation. 2 TPR repeats span residues 619–652 (WLIL…APVQ) and 689–722 (PLTF…TTRC). 2 disordered regions span residues 771–825 (PQSL…KSEE) and 903–924 (KKPK…QAEN). Positions 903–914 (KKPKGDHKKPPG) are enriched in basic residues. TPR repeat units follow at residues 1071–1105 (SWVL…APHQ), 1108–1141 (DVPL…APHF), and 1142–1175 (AVNH…QPEF).

Belongs to the TTC17 family. Interacts with CATIP. In terms of tissue distribution, expressed in germ cells as well as in somatic cells of the testis (at protein level). Ubiquitous.

Its subcellular location is the cytoplasm. The protein resides in the cell membrane. The protein localises to the cytoskeleton. In terms of biological role, plays a role in primary ciliogenesis by modulating actin polymerization. This Rattus norvegicus (Rat) protein is Tetratricopeptide repeat protein 17 (Ttc17).